Reading from the N-terminus, the 296-residue chain is Ribosomal RNA small subunit methyltransferase A (296 aa).

S-adenosyl-L-methionine contacts are provided by asparagine 32, leucine 34, glycine 59, glutamate 80, aspartate 105, and asparagine 130.

It belongs to the class I-like SAM-binding methyltransferase superfamily. rRNA adenine N(6)-methyltransferase family. RsmA subfamily.

It is found in the cytoplasm. The enzyme catalyses adenosine(1518)/adenosine(1519) in 16S rRNA + 4 S-adenosyl-L-methionine = N(6)-dimethyladenosine(1518)/N(6)-dimethyladenosine(1519) in 16S rRNA + 4 S-adenosyl-L-homocysteine + 4 H(+). Specifically dimethylates two adjacent adenosines (A1518 and A1519) in the loop of a conserved hairpin near the 3'-end of 16S rRNA in the 30S particle. May play a critical role in biogenesis of 30S subunits. The chain is Ribosomal RNA small subunit methyltransferase A from Levilactobacillus brevis (strain ATCC 367 / BCRC 12310 / CIP 105137 / JCM 1170 / LMG 11437 / NCIMB 947 / NCTC 947) (Lactobacillus brevis).